The primary structure comprises 435 residues: Trigger factor (435 aa).

Residues 163-248 enclose the PPIase FKBP-type domain; that stretch reads GDYVTFDFKG…IKEIKVKELP (86 aa).

Belongs to the FKBP-type PPIase family. Tig subfamily.

The protein localises to the cytoplasm. The catalysed reaction is [protein]-peptidylproline (omega=180) = [protein]-peptidylproline (omega=0). Involved in protein export. Acts as a chaperone by maintaining the newly synthesized protein in an open conformation. Functions as a peptidyl-prolyl cis-trans isomerase. The polypeptide is Trigger factor (Geotalea daltonii (strain DSM 22248 / JCM 15807 / FRC-32) (Geobacter daltonii)).